Reading from the N-terminus, the 210-residue chain is uncharacterized protein (210 aa).

Positions 4 to 180 constitute a PfpI endopeptidase domain; it reads RKVYLYVFHT…AVEVLKKLDV (177 aa). Residue Cys-110 is the Nucleophile of the active site.

Belongs to the peptidase C56 family.

This is an uncharacterized protein from Bacillus subtilis (strain 168).